The chain runs to 322 residues: F-box protein At2g16300 (322 aa).

The region spanning 2–50 is the F-box domain; that stretch reads ADWSLLPNDLLELIVGHLETSFEIVLFRSVCSSWRSVVPPQDQSRCLSI.

The sequence is that of F-box protein At2g16300 from Arabidopsis thaliana (Mouse-ear cress).